We begin with the raw amino-acid sequence, 304 residues long: N-acetyl-D-glucosamine kinase (304 aa).

Residues 4–11 and 133–140 contribute to the ATP site; these read GFDIGGTK and GFGGGLIF. The Zn(2+) site is built by H157, C178, C180, and C185.

This sequence belongs to the ROK (NagC/XylR) family. NagK subfamily.

The catalysed reaction is N-acetyl-D-glucosamine + ATP = N-acetyl-D-glucosamine 6-phosphate + ADP + H(+). It participates in cell wall biogenesis; peptidoglycan recycling. Catalyzes the phosphorylation of N-acetyl-D-glucosamine (GlcNAc) derived from cell-wall degradation, yielding GlcNAc-6-P. This chain is N-acetyl-D-glucosamine kinase, found in Pasteurella multocida (strain Pm70).